Reading from the N-terminus, the 152-residue chain is UPF0225 protein YchJ (152 aa).

The protein belongs to the UPF0225 family.

This Shigella boydii serotype 18 (strain CDC 3083-94 / BS512) protein is UPF0225 protein YchJ.